Consider the following 580-residue polypeptide: F-box only protein 24 (580 aa).

The F-box domain maps to 36–82; the sequence is PISIQLFPPELVEHIISFLPVRDLVALGQTCRYFHEVCDAEGVWRRI. An RCC1 repeat occupies 376-425; it reads GRIFMQGNNRYGQLGTGDKMDRGEPTQVRYLQRPITLWCGLNHSLVLSQS.

In terms of assembly, directly interacts with SKP1 and CUL1.

In terms of biological role, substrate-recognition component of the SCF (SKP1-CUL1-F-box protein)-type E3 ubiquitin ligase complex. This Macaca fascicularis (Crab-eating macaque) protein is F-box only protein 24 (FBXO24).